The chain runs to 279 residues: NH(3)-dependent NAD(+) synthetase (279 aa).

46–53 serves as a coordination point for ATP; the sequence is GISGGQDS. Asp52 provides a ligand contact to Mg(2+). Arg145 lines the deamido-NAD(+) pocket. Position 165 (Thr165) interacts with ATP. Glu170 contacts Mg(2+). Residues Lys178 and Asp185 each contribute to the deamido-NAD(+) site. Residues Lys194 and Thr216 each contribute to the ATP site. Deamido-NAD(+) is bound at residue 265–266; sequence HK.

It belongs to the NAD synthetase family. Homodimer.

The enzyme catalyses deamido-NAD(+) + NH4(+) + ATP = AMP + diphosphate + NAD(+) + H(+). It functions in the pathway cofactor biosynthesis; NAD(+) biosynthesis; NAD(+) from deamido-NAD(+) (ammonia route): step 1/1. Catalyzes the ATP-dependent amidation of deamido-NAD to form NAD. Uses ammonia as a nitrogen source. The protein is NH(3)-dependent NAD(+) synthetase of Rhodococcus jostii (strain RHA1).